The following is a 69-amino-acid chain: Amphipathic peptide CT2 (69 aa).

Residues 1-23 form the signal peptide; it reads MKTQFVILIVAVVLLQLIANSEA. F36 is modified (phenylalanine amide). A propeptide spanning residues 40–69 is cleaved from the precursor; it reads GLRNLDNLDDDIFEPEMSEADLRYLQDLLR.

This sequence belongs to the non-disulfide-bridged peptide (NDBP) superfamily. Short antimicrobial peptide (group 4) family. As to expression, expressed by the venom gland.

It localises to the secreted. The protein localises to the target cell membrane. Functionally, amphipathic peptide that shows antibacterial activities against both Gram-positive (MIC=10 uM, 20 uM and 20 uM against S.aureus, B.subtilis and S.agalactiae, respectively) and Gram-negative bacteria (MIC=20 uM, 10 uM, and 10 uM against E.coli, S.typhi, and P.aeruginosa, respectively). Is mildly hemolytic at its MIC range, but shows a strong cytotoxic activity at higher concentrations, reaching 84% lysis at 50 uM. In Vaejovis mexicanus smithi (Mexican scorpion), this protein is Amphipathic peptide CT2.